We begin with the raw amino-acid sequence, 3013 residues long: Protein furry homolog-like (3013 aa).

Serine 2 carries the post-translational modification N-acetylserine. Residues 90–109 (DESYEYRPRSSTKSKGDEQQ) form a disordered region. Serine 844 carries the post-translational modification Phosphoserine. Disordered stretches follow at residues 878-897 (SSSTSAGSVRCSPPETLAST) and 1476-1498 (VTSGTTSSSNTMVAPTDGNPDNK). Positions 1476–1486 (VTSGTTSSSNT) are enriched in low complexity. Phosphoserine is present on residues serine 1914, serine 1935, serine 1941, serine 1945, and serine 1957. Residue threonine 1959 is modified to Phosphothreonine. Serine 1978, serine 2272, and serine 2454 each carry phosphoserine. A disordered region spans residues 2459-2492 (DKGDTPSLQEYQCSSSTPSLNLTNQEDTDESSEE). Residues 2464–2483 (PSLQEYQCSSSTPSLNLTNQ) are compositionally biased toward polar residues. Phosphoserine is present on serine 2499. Disordered regions lie at residues 2508–2567 (LNSD…DTTS) and 2636–2660 (EEEADFSGLSSQDEEEQDGFPEVQT). Polar residues-rich tracts occupy residues 2528-2539 (SEDSTGSITTEE) and 2555-2567 (DNANSRLPEDTTS).

It belongs to the furry protein family. Widely expressed with higher expression in colon, placenta, brain and cells of lymphoid origin.

Plays a key role in maintaining the integrity of polarized cell extensions during morphogenesis, regulates the actin cytoskeleton and plays a key role in patterning sensory neuron dendritic fields by promoting avoidance between homologous dendrites as well as by limiting dendritic branching. May function as a transcriptional activator. This chain is Protein furry homolog-like (FRYL), found in Homo sapiens (Human).